Here is a 616-residue protein sequence, read N- to C-terminus: Dihydroxy-acid dehydratase (616 aa).

D81 serves as a coordination point for Mg(2+). Residue C122 coordinates [2Fe-2S] cluster. D123 and K124 together coordinate Mg(2+). Position 124 is an N6-carboxylysine (K124). C195 lines the [2Fe-2S] cluster pocket. E491 serves as a coordination point for Mg(2+). S517 acts as the Proton acceptor in catalysis.

Belongs to the IlvD/Edd family. Homodimer. It depends on [2Fe-2S] cluster as a cofactor. The cofactor is Mg(2+).

It carries out the reaction (2R)-2,3-dihydroxy-3-methylbutanoate = 3-methyl-2-oxobutanoate + H2O. The catalysed reaction is (2R,3R)-2,3-dihydroxy-3-methylpentanoate = (S)-3-methyl-2-oxopentanoate + H2O. It functions in the pathway amino-acid biosynthesis; L-isoleucine biosynthesis; L-isoleucine from 2-oxobutanoate: step 3/4. It participates in amino-acid biosynthesis; L-valine biosynthesis; L-valine from pyruvate: step 3/4. Its function is as follows. Functions in the biosynthesis of branched-chain amino acids. Catalyzes the dehydration of (2R,3R)-2,3-dihydroxy-3-methylpentanoate (2,3-dihydroxy-3-methylvalerate) into 2-oxo-3-methylpentanoate (2-oxo-3-methylvalerate) and of (2R)-2,3-dihydroxy-3-methylbutanoate (2,3-dihydroxyisovalerate) into 2-oxo-3-methylbutanoate (2-oxoisovalerate), the penultimate precursor to L-isoleucine and L-valine, respectively. This chain is Dihydroxy-acid dehydratase, found in Photorhabdus laumondii subsp. laumondii (strain DSM 15139 / CIP 105565 / TT01) (Photorhabdus luminescens subsp. laumondii).